We begin with the raw amino-acid sequence, 705 residues long: MRNGNLAGLLAEQASEAGWYDRPAFYAADVVTHGQIHDGAARLGEVLRNRGLSSGDRVLLCLPDSPDLVQLLLACLARGVMAFLANPELHRDDHALAARNTEPALVVTSDALRDRFQPSRVAEAAELMSEAARVAPGGYEPMGGDALAYATYTSGTTGPPKAAIHRHADPLTFVDAMCRKALRLTPEDTGLCSARMYFAYGLGNSVWFPLATGGSAVINSAPVTPEAAAILSARFGPSVLYGVPNFFARVIDSCSPDSFRSLRCVVSAGEALELGLAERLMEFFGGIPILDGIGSTEVGQTFVSNRVDEWRLGTLGRVLPPYEIRVVAPDGTTAGPGVEGDLWVRGPAIAKGYWNRPDSPVANEGWLDTRDRVCIDSDGWVTYRCRADDTEVIGGVNVDPREVERLIIEDEAVAEAAVVAVRESTGASTLQAFLVATSGATIDGSVMRDLHRGLLNRLSAFKVPHRFAVVDRLPRTPNGKLVRGALRKQSPTKPIWELSLTEPGSGVRAQRDDLSASNMTIAGGNDGGATLRERLVALRQERQRLVVDAVCAEAAKMLGEPDPWSVDQDLAFSELGFDSQMTVTLCKRLAAVTGLRLPETVGWDYGSISGLAQYLEAELAGGHGRLKSAGPVNSGATGLWAIEEQLNKVEELVAVIADGEKQRVADRLRALLGTIAGSEAGLGKLIQAASTPDEIFQLIDSELGK.

A Carrier domain is found at 541–619 (ERQRLVVDAV…GLAQYLEAEL (79 aa)). Ser-579 bears the O-(pantetheine 4'-phosphoryl)serine mark.

Belongs to the ATP-dependent AMP-binding enzyme family.

The enzyme catalyses holo-[4-hydroxyphenylalkanoate synthase] + 4-hydroxybenzoate + ATP = 4-hydroxyphenyl-[4-hydroxyphenylalkanoate synthase] + AMP + diphosphate. It participates in lipid metabolism; fatty acid biosynthesis. Functionally, catalyzes the adenylation of p-hydroxybenzoic acid (pHBA) to form p-hydroxybenzoic acid-AMP (pHBA-AMP), which is converted directly to p-hydroxybenzoyl-S-FadD22 (pHBA-S-FAdD22) thioester intermediate in a CoA-independent manner by attack of the phosphopantetheine thiol of FadD22. Usually, this intermediate primes the biosynthesis of the phenolphthiocerol (PPOL) by presenting the pHBA starter unit for elongation by Pks15/1, but M.tuberculosis lacks Pks15/1 due to a natural frameshift and thus is unable to produce PPOL. This is p-hydroxybenzoic acid--AMP ligase FadD22 (fadD22) from Mycobacterium tuberculosis (strain CDC 1551 / Oshkosh).